The primary structure comprises 206 residues: Guanylate kinase (206 aa).

Positions 5-183 (FNLLILSGPS…SKEIILSIAK (179 aa)) constitute a Guanylate kinase-like domain. Residue 12-19 (GPSGAGKS) participates in ATP binding.

It belongs to the guanylate kinase family.

It localises to the cytoplasm. It catalyses the reaction GMP + ATP = GDP + ADP. In terms of biological role, essential for recycling GMP and indirectly, cGMP. The protein is Guanylate kinase of Helicobacter pylori (strain HPAG1).